The primary structure comprises 280 residues: Diaminopimelate epimerase (280 aa).

Residues Asn-13 and Asn-66 each contribute to the substrate site. Cys-75 functions as the Proton donor in the catalytic mechanism. Substrate is bound by residues 76 to 77, Asn-165, Asn-198, and 216 to 217; these read GN and ER. Catalysis depends on Cys-225, which acts as the Proton acceptor. 226-227 serves as a coordination point for substrate; the sequence is GT.

It belongs to the diaminopimelate epimerase family. In terms of assembly, homodimer.

Its subcellular location is the cytoplasm. The catalysed reaction is (2S,6S)-2,6-diaminopimelate = meso-2,6-diaminopimelate. The protein operates within amino-acid biosynthesis; L-lysine biosynthesis via DAP pathway; DL-2,6-diaminopimelate from LL-2,6-diaminopimelate: step 1/1. Its function is as follows. Catalyzes the stereoinversion of LL-2,6-diaminopimelate (L,L-DAP) to meso-diaminopimelate (meso-DAP), a precursor of L-lysine and an essential component of the bacterial peptidoglycan. The protein is Diaminopimelate epimerase of Cyanothece sp. (strain PCC 7425 / ATCC 29141).